The chain runs to 358 residues: Uroporphyrinogen decarboxylase (358 aa).

Substrate contacts are provided by residues 28–32 (RQAGR), D78, Y154, S208, and H324.

It belongs to the uroporphyrinogen decarboxylase family. In terms of assembly, homodimer.

It is found in the cytoplasm. It carries out the reaction uroporphyrinogen III + 4 H(+) = coproporphyrinogen III + 4 CO2. It participates in porphyrin-containing compound metabolism; protoporphyrin-IX biosynthesis; coproporphyrinogen-III from 5-aminolevulinate: step 4/4. Functionally, catalyzes the decarboxylation of four acetate groups of uroporphyrinogen-III to yield coproporphyrinogen-III. The sequence is that of Uroporphyrinogen decarboxylase from Acidiphilium cryptum (strain JF-5).